The chain runs to 77 residues: Small ribosomal subunit protein bS16c (77 aa).

The protein belongs to the bacterial ribosomal protein bS16 family.

It is found in the plastid. The protein localises to the chloroplast. The polypeptide is Small ribosomal subunit protein bS16c (Eucalyptus globulus subsp. globulus (Tasmanian blue gum)).